The chain runs to 305 residues: Aspartate carbamoyltransferase catalytic subunit (305 aa).

The carbamoyl phosphate site is built by Arg-54 and Thr-55. Lys-83 contributes to the L-aspartate binding site. Residues Arg-104, His-132, and Gln-135 each contribute to the carbamoyl phosphate site. The L-aspartate site is built by Arg-165 and Arg-226. Positions 265 and 266 each coordinate carbamoyl phosphate.

This sequence belongs to the aspartate/ornithine carbamoyltransferase superfamily. ATCase family. As to quaternary structure, heterooligomer of catalytic and regulatory chains.

The catalysed reaction is carbamoyl phosphate + L-aspartate = N-carbamoyl-L-aspartate + phosphate + H(+). It functions in the pathway pyrimidine metabolism; UMP biosynthesis via de novo pathway; (S)-dihydroorotate from bicarbonate: step 2/3. In terms of biological role, catalyzes the condensation of carbamoyl phosphate and aspartate to form carbamoyl aspartate and inorganic phosphate, the committed step in the de novo pyrimidine nucleotide biosynthesis pathway. The chain is Aspartate carbamoyltransferase catalytic subunit from Pyrobaculum arsenaticum (strain DSM 13514 / JCM 11321 / PZ6).